The sequence spans 351 residues: Nicotinate-nucleotide--dimethylbenzimidazole phosphoribosyltransferase (351 aa).

The active-site Proton acceptor is the E317.

The protein belongs to the CobT family.

The catalysed reaction is 5,6-dimethylbenzimidazole + nicotinate beta-D-ribonucleotide = alpha-ribazole 5'-phosphate + nicotinate + H(+). It functions in the pathway nucleoside biosynthesis; alpha-ribazole biosynthesis; alpha-ribazole from 5,6-dimethylbenzimidazole: step 1/2. Functionally, catalyzes the synthesis of alpha-ribazole-5'-phosphate from nicotinate mononucleotide (NAMN) and 5,6-dimethylbenzimidazole (DMB). The protein is Nicotinate-nucleotide--dimethylbenzimidazole phosphoribosyltransferase of Pseudomonas aeruginosa (strain ATCC 15692 / DSM 22644 / CIP 104116 / JCM 14847 / LMG 12228 / 1C / PRS 101 / PAO1).